The chain runs to 156 residues: Small ribosomal subunit protein uS7 (156 aa).

It belongs to the universal ribosomal protein uS7 family. As to quaternary structure, part of the 30S ribosomal subunit. Contacts proteins S9 and S11.

Functionally, one of the primary rRNA binding proteins, it binds directly to 16S rRNA where it nucleates assembly of the head domain of the 30S subunit. Is located at the subunit interface close to the decoding center, probably blocks exit of the E-site tRNA. The polypeptide is Small ribosomal subunit protein uS7 (Chromobacterium violaceum (strain ATCC 12472 / DSM 30191 / JCM 1249 / CCUG 213 / NBRC 12614 / NCIMB 9131 / NCTC 9757 / MK)).